Here is a 641-residue protein sequence, read N- to C-terminus: Fibrinogen alpha-2 chain (641 aa).

An N-terminal signal peptide occupies residues 1–23 (MTLRGVSMVLTWCLLVSKAWSSG). A coiled-coil region spans residues 107–226 (SVSDVSNQVV…IVHESFSVER (120 aa)). A disordered region spans residues 228–327 (DARSLHPYSG…QKTEELSFKK (100 aa)). Asn-271 carries an N-linked (GlcNAc...) asparagine glycan. Residues 279-289 (VDERSKVEKDV) are compositionally biased toward basic and acidic residues. Over residues 293-317 (STSSVSSSSSSSSSSSSTSSTISST) the composition is skewed to low complexity. Residues 395–636 (RTNLSEYIDC…RTAVRFRRVQ (242 aa)) enclose the Fibrinogen C-terminal domain. Asn-397 is a glycosylation site (N-linked (GlcNAc...) asparagine). Cysteines 404 and 435 form a disulfide. N-linked (GlcNAc...) asparagine glycosylation is present at Asn-458. Cys-571 and Cys-584 are disulfide-bonded.

As to quaternary structure, heterohexamer; disulfide linked. Contains 2 sets of 3 non-identical chains (alpha, beta and gamma). The 2 heterotrimers are in head to head conformation with the N-termini in a small central domain. Conversion of fibrinogen to fibrin is triggered by thrombin, which cleaves fibrinopeptides A and B from alpha and beta chains, and thus exposes the N-terminal polymerization sites responsible for the formation of the soft clot. The soft clot is converted into the hard clot by factor XIIIA which catalyzes the epsilon-(gamma-glutamyl)lysine cross-linking between gamma chains (stronger) and between alpha chains (weaker) of different monomers. In terms of processing, forms F13A-mediated cross-links between a glutamine and the epsilon-amino group of a lysine residue, forming fibronectin-fibrinogen heteropolymers.

The protein resides in the secreted. In terms of biological role, fibrinogen has a double function: yielding monomers that polymerize into fibrin and acting as a cofactor in platelet aggregation. This Petromyzon marinus (Sea lamprey) protein is Fibrinogen alpha-2 chain.